A 156-amino-acid chain; its full sequence is Type IV major fimbrial protein FimA (156 aa).

Positions 1–7 (MKSLQKG) are cleaved as a propeptide — leader sequence. Phenylalanine 8 carries the N-methylphenylalanine modification. Residues 8 to 28 (FTLIELMIVVAIIGILAAIAI) form a helical membrane-spanning segment. Intrachain disulfides connect cysteine 57–cysteine 67 and cysteine 140–cysteine 153.

It belongs to the N-Me-Phe pilin family. The pili are polar flexible filaments of about 5.4 nanometers diameter and 2.5 micrometers average length; they consist of only a single polypeptide chain arranged in a helical configuration of five subunits per turn in the assembled pilus.

Its subcellular location is the fimbrium. It is found in the membrane. Functionally, major component of the type IV fimbriae that plays an essential role in twitching motility, natural transformation, and protease secretion. The polypeptide is Type IV major fimbrial protein FimA (fimA) (Dichelobacter nodosus (Bacteroides nodosus)).